We begin with the raw amino-acid sequence, 522 residues long: Target of rapamycin complex 2 subunit MAPKAP1 (522 aa).

An interaction with MAP3K2 region spans residues 2–184 (GFLDNPTIIL…KKIDVYLPLH (183 aa)). The interaction with NBN stretch occupies residues 2–267 (GFLDNPTIIL…GFSTLALVEK (266 aa)). Thr-86 is subject to Phosphothreonine. Phosphoserine occurs at positions 128, 186, 315, and 356. The CRIM domain maps to 139–267 (QSILSVRLEQ…GFSTLALVEK (129 aa)). Positions 279–353 (LFVRINAAHG…QSAWEFCLVR (75 aa)) are SIN1-type RBD. Residues 382-487 (HYKSFKVSMI…IVLKVNYILE (106 aa)) enclose the SIN1-type PH domain. Arg-393 contributes to the a 1,2-diacyl-sn-glycero-3-phospho-(1D-myo-inositol-3,4,5-trisphosphate) binding site. Residue Thr-398 is modified to Phosphothreonine. A 1,2-diacyl-sn-glycero-3-phospho-(1D-myo-inositol-3,4,5-trisphosphate) is bound by residues Lys-428 and Lys-464. The tract at residues 468 to 522 (FESDAATVNEIVLKVNYILESRASTARADYFAQKQRKLNRRTSFSFQKEKKSGQQ) is interaction with ATF2. The residue at position 510 (Ser-510) is a Phosphoserine.

It belongs to the SIN1 family. Component of the mechanistic target of rapamycin complex 2 (mTORC2), consisting in two heterotretramers composed of MTOR, MLST8, RICTOR and MAPKAP1/SIN1. The mTORC2 core complex associates with PRR5/PROTOR1 and/or PRR5L/PROTOR2. Contrary to mTORC1, mTORC2 does not bind to and is not sensitive to FKBP12-rapamycin. Interacts with MAP3K2. Interacts with ATF2. Interacts with MAPK8. Interacts with GTP-bound HRAS and KRAS; inhibiting their activity. Interacts with IFNAR2. Post-translationally, phosphorylation at Ser-128 by PKC promotes relocalization to the perinuclear region, where the mTORC2 complex specifically mediates phosphorylation of SGK1. Phosphorylated at Thr-86 by AKT1 or RPS6KB1 in the presence of growth factors; the effect of this phosphorylation is however unclear. According to two studies, phosphorylation at Thr-86 by AKT1 is part of a positive feedback loop that increases mTORC2 activation. According to another study, phosphorylation at Thr-86 and Thr-398 by RPS6KB1 promotes dissociation from the mTORC2 complex, leading to inhibit mTORC2 signaling. In terms of tissue distribution, present in the lumenal epithelium and glandular epithelium of endometrium (at protein level).

It is found in the cell membrane. Its subcellular location is the cytoplasmic vesicle. The protein localises to the endoplasmic reticulum membrane. It localises to the early endosome membrane. The protein resides in the late endosome membrane. It is found in the lysosome membrane. Its subcellular location is the golgi apparatus membrane. The protein localises to the mitochondrion outer membrane. It localises to the cytoplasm. The protein resides in the perinuclear region. It is found in the nucleus. With respect to regulation, phosphatidylinositol 3,4,5-trisphosphate (PI(3,4,5)P3) promotes MTOR activation by relieving MAPKAP1/SIN1-mediated inhibition of MTOR that takes place in absence of PI(3,4,5)P3. In terms of biological role, component of the mechanistic target of rapamycin complex 2 (mTORC2), which transduces signals from growth factors to pathways involved in proliferation, cytoskeletal organization, lipogenesis and anabolic output. In response to growth factors, mTORC2 phosphorylates and activates AGC protein kinase family members, including AKT (AKT1, AKT2 and AKT3), PKC (PRKCA, PRKCB and PRKCE) and SGK1. In contrast to mTORC1, mTORC2 is nutrient-insensitive. Within the mTORC2 complex, MAPKAP1/SIN1 acts as a substrate adapter which recognizes and binds AGC protein kinase family members for phosphorylation by MTOR. mTORC2 plays a critical role in AKT1 activation by mediating phosphorylation of different sites depending on the context, such as 'Thr-450', 'Ser-473', 'Ser-477' or 'Thr-479', facilitating the phosphorylation of the activation loop of AKT1 on 'Thr-308' by PDPK1/PDK1 which is a prerequisite for full activation. mTORC2 catalyzes the phosphorylation of SGK1 at 'Ser-422' and of PRKCA on 'Ser-657'. The mTORC2 complex also phosphorylates various proteins involved in insulin signaling, such as FBXW8 and IGF2BP1. mTORC2 acts upstream of Rho GTPases to regulate the actin cytoskeleton, probably by activating one or more Rho-type guanine nucleotide exchange factors. mTORC2 promotes the serum-induced formation of stress-fibers or F-actin. MAPKAP1 inhibits MAP3K2 by preventing its dimerization and autophosphorylation. Inhibits HRAS and KRAS independently of mTORC2 complex. Enhances osmotic stress-induced phosphorylation of ATF2 and ATF2-mediated transcription. Involved in ciliogenesis, regulates cilia length through its interaction with CCDC28B independently of mTORC2 complex. This is Target of rapamycin complex 2 subunit MAPKAP1 (MAPKAP1) from Ovis aries (Sheep).